Consider the following 1293-residue polypeptide: Late blight resistance protein R1-A (1293 aa).

2 coiled-coil regions span residues 423-446 (RYSDSLDFLKNQLQVIQTEFESLQ) and 538-560 (PRMNEEIVGFEDVIENLRKKLLN). Residues 539–826 (RMNEEIVGFE…SEAFIKSSEG (288 aa)) enclose the NB-ARC domain. ATP is bound at residue 572–579 (GMPGLGKT). LRR repeat units follow at residues 876-899 (AEENFLLWINRDQITKPSSCVYSH), 956-981 (FKFLKVLDLEHRVFIDFIPTELVYLK), 1027-1049 (MVKLRHLYIPDFSTRIEAALLEN), 1056-1079 (LETLSTLYFSRVEDAELMLRKTPN), 1102-1125 (PIRLEILKLYRSKFKTIPFCISAP), 1149-1172 (LKHLEVLILYKVEFGDHREWKVSN), 1175-1197 (FPQLKILKLEYLSLVKWIVADDA), 1198-1222 (FPNLEQLVLRGCQDLMEIPSCFMDI), and 1235-1259 (ESVVKSALNIQETQVEDYQNTNFKL).

Belongs to the disease resistance NB-LRR family.

The protein resides in the cytoplasm. It is found in the membrane. In terms of biological role, confers resistance to late blight (Phytophthora infestans) races carrying the avirulence gene Avr1. Resistance proteins guard the plant against pathogens that contain an appropriate avirulence protein via an indirect interaction with this avirulence protein. That triggers a defense system including the hypersensitive response, which restricts the pathogen growth. The protein is Late blight resistance protein R1-A (R1A) of Solanum demissum (Wild potato).